Consider the following 178-residue polypeptide: Small ribosomal subunit protein uS5 (178 aa).

The S5 DRBM domain maps to 17-80 (FEERIVEIRR…AAARASVVEI (64 aa)).

This sequence belongs to the universal ribosomal protein uS5 family. As to quaternary structure, part of the 30S ribosomal subunit. Contacts proteins S4 and S8.

Functionally, with S4 and S12 plays an important role in translational accuracy. Located at the back of the 30S subunit body where it stabilizes the conformation of the head with respect to the body. The protein is Small ribosomal subunit protein uS5 of Pseudothermotoga lettingae (strain ATCC BAA-301 / DSM 14385 / NBRC 107922 / TMO) (Thermotoga lettingae).